The primary structure comprises 674 residues: Xaa-Pro aminopeptidase 2 (674 aa).

Positions 1–21 are cleaved as a signal peptide; sequence MARAHWGCCPWLVLLCACAWG. 3 N-linked (GlcNAc...) asparagine glycosylation sites follow: N35, N49, and N65. Residue R116 coordinates substrate. N-linked (GlcNAc...) asparagine glycosylation is found at N278 and N291. H430 is a binding site for substrate. D450, D461, and H524 together coordinate Zn(2+). Substrate-binding residues include H524, H533, and E555. Zn(2+) is bound by residues E555 and E569. Residue A649 is the site of GPI-anchor amidated alanine attachment. Positions 650–674 are cleaved as a propeptide — removed in mature form; it reads ARAPDTASWASVLVVSTLAILGWSV.

The protein belongs to the peptidase M24B family. In terms of assembly, homotrimer. Zn(2+) is required as a cofactor. N-glycosylated. As to expression, expressed in kidney, lung, heart, placenta, liver, small intestine and colon. No expression in brain, skeletal muscle, pancreas, spleen, thymus, prostate, testis and ovary.

It is found in the cell membrane. The enzyme catalyses Release of any N-terminal amino acid, including proline, that is linked to proline, even from a dipeptide or tripeptide.. With respect to regulation, inhibited by apstatin and the chelating agent 1,10-phenanthroline. Also inhibited by high concentrations of Zn(2+). Not significantly inhibited by bestatin or phosphoramidon. Its function is as follows. Membrane-bound metalloprotease which catalyzes the removal of a penultimate prolyl residue from the N-termini of peptides, such as Arg-Pro-Pro. May play a role in the metabolism of the vasodilator bradykinin. The chain is Xaa-Pro aminopeptidase 2 (XPNPEP2) from Homo sapiens (Human).